A 500-amino-acid polypeptide reads, in one-letter code: Chromosomal replication initiator protein DnaA (500 aa).

The interval 1 to 81 (MVNASGDPVI…LQALRTVTGE (81 aa)) is domain I, interacts with DnaA modulators. Residues 81–155 (ENMFPAFKVV…QQKMNRDPET (75 aa)) are domain II. The tract at residues 156–377 (HLNKNFTFDS…GALTRVTAVA (222 aa)) is domain III, AAA+ region. ATP-binding residues include glycine 200, glycine 202, lysine 203, and threonine 204. Residues 378–500 (SLSNQPVTRA…TVRLKQSNTN (123 aa)) are domain IV, binds dsDNA.

It belongs to the DnaA family. As to quaternary structure, oligomerizes as a right-handed, spiral filament on DNA at oriC.

It localises to the cytoplasm. Its function is as follows. Plays an essential role in the initiation and regulation of chromosomal replication. ATP-DnaA binds to the origin of replication (oriC) to initiate formation of the DNA replication initiation complex once per cell cycle. Binds the DnaA box (a 9 base pair repeat at the origin) and separates the double-stranded (ds)DNA. Forms a right-handed helical filament on oriC DNA; dsDNA binds to the exterior of the filament while single-stranded (ss)DNA is stabiized in the filament's interior. The ATP-DnaA-oriC complex binds and stabilizes one strand of the AT-rich DNA unwinding element (DUE), permitting loading of DNA polymerase. After initiation quickly degrades to an ADP-DnaA complex that is not apt for DNA replication. Binds acidic phospholipids. The sequence is that of Chromosomal replication initiator protein DnaA from Bifidobacterium longum subsp. infantis (strain ATCC 15697 / DSM 20088 / JCM 1222 / NCTC 11817 / S12).